Reading from the N-terminus, the 365-residue chain is Histidinol-phosphate aminotransferase (365 aa).

Lys-222 carries the post-translational modification N6-(pyridoxal phosphate)lysine.

This sequence belongs to the class-II pyridoxal-phosphate-dependent aminotransferase family. Histidinol-phosphate aminotransferase subfamily. Homodimer. Requires pyridoxal 5'-phosphate as cofactor.

The catalysed reaction is L-histidinol phosphate + 2-oxoglutarate = 3-(imidazol-4-yl)-2-oxopropyl phosphate + L-glutamate. Its pathway is amino-acid biosynthesis; L-histidine biosynthesis; L-histidine from 5-phospho-alpha-D-ribose 1-diphosphate: step 7/9. The sequence is that of Histidinol-phosphate aminotransferase from Geobacillus thermodenitrificans (strain NG80-2).